The sequence spans 335 residues: Eukaryotic translation initiation factor 3 subunit I (335 aa).

WD repeat units follow at residues 8–47, 50–91, 145–184, 189–228, and 286–325; these read GHER…RLGT, GHQG…KTWD, CAES…LLFN, EPDL…VMKT, and GHFG…FDFT.

It belongs to the eIF-3 subunit I family. As to quaternary structure, component of the eukaryotic translation initiation factor 3 (eIF-3) complex.

The protein localises to the cytoplasm. Its function is as follows. Component of the eukaryotic translation initiation factor 3 (eIF-3) complex, which is involved in protein synthesis of a specialized repertoire of mRNAs and, together with other initiation factors, stimulates binding of mRNA and methionyl-tRNAi to the 40S ribosome. The eIF-3 complex specifically targets and initiates translation of a subset of mRNAs involved in cell proliferation. This chain is Eukaryotic translation initiation factor 3 subunit I (tif34), found in Sclerotinia sclerotiorum (strain ATCC 18683 / 1980 / Ss-1) (White mold).